Here is a 485-residue protein sequence, read N- to C-terminus: ATP synthase subunit beta 1 (485 aa).

ATP is bound at residue 157 to 164 (GGAGVGKT).

This sequence belongs to the ATPase alpha/beta chains family. In terms of assembly, F-type ATPases have 2 components, CF(1) - the catalytic core - and CF(0) - the membrane proton channel. CF(1) has five subunits: alpha(3), beta(3), gamma(1), delta(1), epsilon(1). CF(0) has three main subunits: a(1), b(2) and c(9-12). The alpha and beta chains form an alternating ring which encloses part of the gamma chain. CF(1) is attached to CF(0) by a central stalk formed by the gamma and epsilon chains, while a peripheral stalk is formed by the delta and b chains.

The protein localises to the cell inner membrane. The catalysed reaction is ATP + H2O + 4 H(+)(in) = ADP + phosphate + 5 H(+)(out). Its function is as follows. Produces ATP from ADP in the presence of a proton gradient across the membrane. The catalytic sites are hosted primarily by the beta subunits. The sequence is that of ATP synthase subunit beta 1 from Psychromonas ingrahamii (strain DSM 17664 / CCUG 51855 / 37).